We begin with the raw amino-acid sequence, 519 residues long: Cytosol aminopeptidase (519 aa).

K45 carries the N6-succinyllysine modification. The residue at position 54 (S54) is a Phosphoserine. N6-succinyllysine is present on residues K61 and K103. 2 positions are modified to phosphoserine: S180 and S194. Positions 202 and 203 each coordinate Zn(2+). K221 is modified (N6-acetyllysine; alternate). K221 is modified (N6-succinyllysine; alternate). Phosphoserine is present on S238. Zn(2+) contacts are provided by K282 and D287. K282, D287, S292, and K294 together coordinate substrate. Residue D287 coordinates Mg(2+). K294 is an active-site residue. The Zn(2+) site is built by R303, D305, D364, and E366. Substrate-binding residues include D305 and D364. Mg(2+) contacts are provided by D364 and E366. The active site involves R368. The residue at position 455 (K455) is an N6-acetyllysine; alternate. Residue K455 is modified to N6-succinyllysine; alternate. An N6-succinyllysine modification is found at K476. The residue at position 489 (K489) is an N6-acetyllysine; alternate. K489 is modified (N6-succinyllysine; alternate).

The protein belongs to the peptidase M17 family. As to quaternary structure, homohexamer. Zn(2+) is required as a cofactor. The cofactor is Mn(2+).

The protein localises to the cytoplasm. The enzyme catalyses Release of an N-terminal amino acid, Xaa-|-Yaa-, in which Xaa is preferably Leu, but may be other amino acids including Pro although not Arg or Lys, and Yaa may be Pro. Amino acid amides and methyl esters are also readily hydrolyzed, but rates on arylamides are exceedingly low.. It carries out the reaction an S-substituted L-cysteinylglycine + H2O = an S-substituted L-cysteine + glycine. The catalysed reaction is L-cysteinylglycine + H2O = L-cysteine + glycine. It catalyses the reaction S-benzyl-L-cysteinylglycine + H2O = S-benzyl-L-cysteine + glycine. The enzyme catalyses Release of N-terminal proline from a peptide.. In terms of biological role, cytosolic metallopeptidase that catalyzes the removal of unsubstituted N-terminal hydrophobic amino acids from various peptides. The presence of Zn(2+) ions is essential for the peptidase activity, and the association with other cofactors can modulate the substrate spectificity of the enzyme. For instance, in the presence of Mn(2+), it displays a specific Cys-Gly hydrolyzing activity of Cys-Gly-S-conjugates. Involved in the metabolism of glutathione and in the degradation of glutathione S-conjugates, which may play a role in the control of the cell redox status. This chain is Cytosol aminopeptidase, found in Mus musculus (Mouse).